A 288-amino-acid polypeptide reads, in one-letter code: 4-hydroxybenzoate octaprenyltransferase (288 aa).

8 consecutive transmembrane segments (helical) span residues 23 to 43 (IGSL…GKGI), 46 to 66 (TKIL…GCVV), 98 to 118 (ILFV…NSMT), 141 to 161 (LPQV…FAAV), 165 to 185 (LPLV…AYDT), 213 to 233 (LIIG…GWLM), 234 to 254 (NLGG…VHQQ), and 268 to 288 (AFLN…ISYL).

Belongs to the UbiA prenyltransferase family. The cofactor is Mg(2+).

The protein localises to the cell inner membrane. The catalysed reaction is all-trans-octaprenyl diphosphate + 4-hydroxybenzoate = 4-hydroxy-3-(all-trans-octaprenyl)benzoate + diphosphate. The protein operates within cofactor biosynthesis; ubiquinone biosynthesis. Its function is as follows. Catalyzes the prenylation of para-hydroxybenzoate (PHB) with an all-trans polyprenyl group. Mediates the second step in the final reaction sequence of ubiquinone-8 (UQ-8) biosynthesis, which is the condensation of the polyisoprenoid side chain with PHB, generating the first membrane-bound Q intermediate 3-octaprenyl-4-hydroxybenzoate. This is 4-hydroxybenzoate octaprenyltransferase from Yersinia enterocolitica serotype O:8 / biotype 1B (strain NCTC 13174 / 8081).